Reading from the N-terminus, the 184-residue chain is Bcl-2-modifying factor (184 aa).

Residues 67–75 are interaction with DLC2; the sequence is DKATQTLSP. The BH3 signature appears at 133 to 147; sequence IARKLQCIADQFHRL.

The protein belongs to the Bcl-2 family. In terms of assembly, interacts with MCL1, BCL2, BCL2L1/BCL-Xl, BCL2A1 and BCL2L2/BCL-w. Interacts with the myosin V actin motor complex through its binding to DLC2. In terms of tissue distribution, isoform 1 is mainly expressed in B-lymphoid cells. Isoform 2 and isoform 3 are mainly expressed in B-CLL and normal B-cells.

In terms of biological role, may play a role in apoptosis. Isoform 1 seems to be the main initiator. This Homo sapiens (Human) protein is Bcl-2-modifying factor (BMF).